A 548-amino-acid chain; its full sequence is Membrane protein insertase YidC (548 aa).

The chain crosses the membrane as a helical span at residues 6–26 (NLLVIALLFVSFMIWQAWEQD). The tract at residues 28 to 55 (NPQPQAQQTTQTTTTAAGSAADQGVPAS) is disordered. The segment covering 30–50 (QPQAQQTTQTTTTAAGSAADQ) has biased composition (low complexity). 4 helical membrane passes run 350 to 370 (FVGN…GIMY), 420 to 440 (LGGC…YYML), 458 to 478 (LSAQ…MFFI), and 499 to 519 (PVIF…YYIV).

Belongs to the OXA1/ALB3/YidC family. Type 1 subfamily. Interacts with the Sec translocase complex via SecD. Specifically interacts with transmembrane segments of nascent integral membrane proteins during membrane integration.

It localises to the cell inner membrane. Its function is as follows. Required for the insertion and/or proper folding and/or complex formation of integral membrane proteins into the membrane. Involved in integration of membrane proteins that insert both dependently and independently of the Sec translocase complex, as well as at least some lipoproteins. Aids folding of multispanning membrane proteins. In Shigella dysenteriae serotype 1 (strain Sd197), this protein is Membrane protein insertase YidC.